Consider the following 689-residue polypeptide: Glycine--tRNA ligase beta subunit (689 aa).

Belongs to the class-II aminoacyl-tRNA synthetase family. Tetramer of two alpha and two beta subunits.

Its subcellular location is the cytoplasm. It catalyses the reaction tRNA(Gly) + glycine + ATP = glycyl-tRNA(Gly) + AMP + diphosphate. In Shewanella amazonensis (strain ATCC BAA-1098 / SB2B), this protein is Glycine--tRNA ligase beta subunit.